Consider the following 264-residue polypeptide: MQAYLDLMAHVRHHGTPKSDRTGTGTLSVFGHQMRFDLSRGFPVVTTKKLHLRSIIHELLWFLSGDSNIAYLKANGVSIWDEWADENGDLGPIYGVQWRSWPTPDGRRVDQLAQVLRDLREHPDSRRHLVSAWNVGELPNMALPPCHTLFQFYVAEGRLSCQLYQRSADIFLGLPFNIASYALLTHMVAQVCDLKPGEFIWTGGDCHLYTNHLEQADRQLQREPLPLPRLRLNPEVRDLFAFRYEDIALEGYQHHPPIKAPVAV.

Arg21 is a binding site for dUMP. Position 51 (His51) interacts with (6R)-5,10-methylene-5,6,7,8-tetrahydrofolate. 126–127 (RR) serves as a coordination point for dUMP. Cys146 functions as the Nucleophile in the catalytic mechanism. DUMP contacts are provided by residues 166–169 (RSAD), Asn177, and 207–209 (HLY). Residue Asp169 participates in (6R)-5,10-methylene-5,6,7,8-tetrahydrofolate binding. Ala263 is a binding site for (6R)-5,10-methylene-5,6,7,8-tetrahydrofolate.

Belongs to the thymidylate synthase family. Bacterial-type ThyA subfamily. As to quaternary structure, homodimer.

The protein localises to the cytoplasm. The enzyme catalyses dUMP + (6R)-5,10-methylene-5,6,7,8-tetrahydrofolate = 7,8-dihydrofolate + dTMP. The protein operates within pyrimidine metabolism; dTTP biosynthesis. Functionally, catalyzes the reductive methylation of 2'-deoxyuridine-5'-monophosphate (dUMP) to 2'-deoxythymidine-5'-monophosphate (dTMP) while utilizing 5,10-methylenetetrahydrofolate (mTHF) as the methyl donor and reductant in the reaction, yielding dihydrofolate (DHF) as a by-product. This enzymatic reaction provides an intracellular de novo source of dTMP, an essential precursor for DNA biosynthesis. The polypeptide is Thymidylate synthase (Alkalilimnicola ehrlichii (strain ATCC BAA-1101 / DSM 17681 / MLHE-1)).